The sequence spans 612 residues: Cyclin-dependent kinase 8 (612 aa).

A Protein kinase domain is found at 23-345; sequence FENSKEIGRG…CEEAMNDIYF (323 aa). Residues 29 to 37 and K57 contribute to the ATP site; that span reads IGRGTYGLV. The Proton acceptor role is filled by D155. Composition is skewed to low complexity over residues 403–455, 472–483, 543–555, 564–573, and 600–612; these read QQQM…MGQP, HQMMQQQHQSQH, PQPGPSGYYQQRP, QGYMNPQMGM, and NPQQQQQWQQYHR. Disordered regions lie at residues 403-483 and 543-612; these read QQQM…QSQH and PQPG…QYHR.

Belongs to the protein kinase superfamily. CMGC Ser/Thr protein kinase family. CDC2/CDKX subfamily. As to quaternary structure, component of the Mediator complex. It depends on Mg(2+) as a cofactor.

It is found in the nucleus. The enzyme catalyses L-seryl-[protein] + ATP = O-phospho-L-seryl-[protein] + ADP + H(+). It catalyses the reaction L-threonyl-[protein] + ATP = O-phospho-L-threonyl-[protein] + ADP + H(+). It carries out the reaction [DNA-directed RNA polymerase] + ATP = phospho-[DNA-directed RNA polymerase] + ADP + H(+). Functionally, component of the Mediator complex, a coactivator involved in regulated gene transcription of nearly all RNA polymerase II-dependent genes. Mediator functions as a bridge to convey information from gene-specific regulatory proteins to the basal RNA polymerase II transcription machinery. Mediator is recruited to promoters by direct interactions with regulatory proteins and serves as a scaffold for the assembly of a functional pre-initiation complex with RNA polymerase II and the general transcription factors. Phosphorylates the CTD (C-terminal domain) of the large subunit of RNA polymerase II (RNAp II), which may inhibit the formation of a transcription initiation complex. This Caenorhabditis briggsae protein is Cyclin-dependent kinase 8 (cdk-8).